The primary structure comprises 277 residues: Large ribosomal subunit protein uL2 (277 aa).

Residues 222 to 277 (GVAMNPVDHPHGGGEGRTSGGRHPVSPWGKPTKGKRTRSNKATDKFIMRSRHQRKK) are disordered.

The protein belongs to the universal ribosomal protein uL2 family. Part of the 50S ribosomal subunit. Forms a bridge to the 30S subunit in the 70S ribosome.

Its function is as follows. One of the primary rRNA binding proteins. Required for association of the 30S and 50S subunits to form the 70S ribosome, for tRNA binding and peptide bond formation. It has been suggested to have peptidyltransferase activity; this is somewhat controversial. Makes several contacts with the 16S rRNA in the 70S ribosome. The sequence is that of Large ribosomal subunit protein uL2 from Bartonella bacilliformis (strain ATCC 35685 / KC583 / Herrer 020/F12,63).